A 155-amino-acid polypeptide reads, in one-letter code: Endoribonuclease YbeY (155 aa).

Zn(2+) is bound by residues H114, H118, and H124.

Belongs to the endoribonuclease YbeY family. It depends on Zn(2+) as a cofactor.

The protein localises to the cytoplasm. Its function is as follows. Single strand-specific metallo-endoribonuclease involved in late-stage 70S ribosome quality control and in maturation of the 3' terminus of the 16S rRNA. This chain is Endoribonuclease YbeY, found in Buchnera aphidicola subsp. Acyrthosiphon pisum (strain APS) (Acyrthosiphon pisum symbiotic bacterium).